Here is a 391-residue protein sequence, read N- to C-terminus: Ferrochelatase (391 aa).

Residues His-196 and Glu-281 each contribute to the Fe cation site.

This sequence belongs to the ferrochelatase family.

Its subcellular location is the cytoplasm. The enzyme catalyses heme b + 2 H(+) = protoporphyrin IX + Fe(2+). It functions in the pathway porphyrin-containing compound metabolism; protoheme biosynthesis; protoheme from protoporphyrin-IX: step 1/1. Its function is as follows. Catalyzes the ferrous insertion into protoporphyrin IX. This is Ferrochelatase from Synechococcus sp. (strain CC9311).